Reading from the N-terminus, the 154-residue chain is Protein-export protein SecB (154 aa).

The protein belongs to the SecB family. Homotetramer, a dimer of dimers. One homotetramer interacts with 1 SecA dimer.

It is found in the cytoplasm. In terms of biological role, one of the proteins required for the normal export of preproteins out of the cell cytoplasm. It is a molecular chaperone that binds to a subset of precursor proteins, maintaining them in a translocation-competent state. It also specifically binds to its receptor SecA. This chain is Protein-export protein SecB, found in Vibrio parahaemolyticus serotype O3:K6 (strain RIMD 2210633).